The chain runs to 310 residues: MPITIKSRSKGLRDTEIDLSKKPTLDDVLKKISANNHNISKYRIRLTYKKESKQVPVISESFFQEEADDSMEFFIKDLGPQISWRLVFFCEYLGPVLVHSLFYYLSTIPTVVDRWHSASSDYNPFLNRVAYFLILGHYGKRLFETLFVHQFSLATMPIFNLFKNCFHYWVLSGLISFGYFGYGFPFGNAKLFKYYSYLKLDDLSTLIGLFVLSELWNFYCHIKLRLWGDYQKKHGNAKIRVPLNQGIFNLFVAPNYTFEVWSWIWFTFVFKFNLFAVLFLTVSTAQMYAWAQKKNKKYHTRRAFLIPFVF.

Residues 1 to 85 (MPITIKSRSK…KDLGPQISWR (85 aa)) are Cytoplasmic-facing. A helical membrane pass occupies residues 86–106 (LVFFCEYLGPVLVHSLFYYLS). Topologically, residues 107-141 (TIPTVVDRWHSASSDYNPFLNRVAYFLILGHYGKR) are lumenal. Residues 142-162 (LFETLFVHQFSLATMPIFNLF) form a helical membrane-spanning segment. The Cytoplasmic segment spans residues 163–165 (KNC). Residues 166 to 186 (FHYWVLSGLISFGYFGYGFPF) traverse the membrane as a helical segment. Residues 187-201 (GNAKLFKYYSYLKLD) are Lumenal-facing. The chain crosses the membrane as a helical span at residues 202–222 (DLSTLIGLFVLSELWNFYCHI). Residues 223–242 (KLRLWGDYQKKHGNAKIRVP) are Cytoplasmic-facing. The helical transmembrane segment at 243-265 (LNQGIFNLFVAPNYTFEVWSWIW) threads the bilayer. Over 266-268 (FTF) the chain is Lumenal. The chain crosses the membrane as a helical span at residues 269-291 (VFKFNLFAVLFLTVSTAQMYAWA). The Cytoplasmic portion of the chain corresponds to 292–310 (QKKNKKYHTRRAFLIPFVF).

This sequence belongs to the steroid 5-alpha reductase family. In terms of assembly, interacts with the fatty acid elongation system components ELO2 and ELO3. Interacts with NVJ1.

Its subcellular location is the endoplasmic reticulum membrane. The catalysed reaction is a very-long-chain 2,3-saturated fatty acyl-CoA + NADP(+) = a very-long-chain (2E)-enoyl-CoA + NADPH + H(+). The enzyme catalyses octadecanoyl-CoA + NADP(+) = (2E)-octadecenoyl-CoA + NADPH + H(+). It catalyses the reaction (2E)-eicosenoyl-CoA + NADPH + H(+) = eicosanoyl-CoA + NADP(+). It carries out the reaction (2E)-docosenoyl-CoA + NADPH + H(+) = docosanoyl-CoA + NADP(+). The catalysed reaction is (2E)-tetracosenoyl-CoA + NADPH + H(+) = tetracosanoyl-CoA + NADP(+). The enzyme catalyses (2E)-hexacosenoyl-CoA + NADPH + H(+) = hexacosanoyl-CoA + NADP(+). It participates in lipid metabolism; fatty acid biosynthesis. Functionally, catalyzes the last of the four reactions of the long-chain fatty acids elongation cycle. This endoplasmic reticulum-bound enzymatic process, allows the addition of 2 carbons to the chain of long- and very long-chain fatty acids/VLCFAs per cycle. This enzyme reduces the trans-2,3-enoyl-CoA fatty acid intermediate to an acyl-CoA that can be further elongated by entering a new cycle of elongation. Thereby, it participates in the production of VLCFAs of different chain lengths that are involved in multiple biological processes as precursors of membrane lipids and lipid mediators. VLCFAs serve for instance as precursors for ceramide and sphingolipids. Required for normal biogenesis of piecemeal microautophagy of the nucleus (PMN) bleps and vesicles during nutrient stress. In Saccharomyces cerevisiae (strain ATCC 204508 / S288c) (Baker's yeast), this protein is Very-long-chain enoyl-CoA reductase (TSC13).